A 226-amino-acid polypeptide reads, in one-letter code: PKHD-type hydroxylase PSPA7_5129 (226 aa).

Positions 78–178 (KVFPPLFNCY…RYASFFWTQS (101 aa)) constitute a Fe2OG dioxygenase domain. Fe cation-binding residues include histidine 96, aspartate 98, and histidine 159. Position 169 (arginine 169) interacts with 2-oxoglutarate.

The cofactor is Fe(2+). L-ascorbate is required as a cofactor.

The protein is PKHD-type hydroxylase PSPA7_5129 of Pseudomonas paraeruginosa (strain DSM 24068 / PA7) (Pseudomonas aeruginosa (strain PA7)).